Reading from the N-terminus, the 522-residue chain is Protein nucleotidyltransferase YdiU (522 aa).

The ATP site is built by glycine 109, glycine 111, arginine 112, lysine 132, aspartate 144, glycine 145, arginine 195, and arginine 202. Aspartate 271 (proton acceptor) is an active-site residue. The Mg(2+) site is built by asparagine 272 and aspartate 281. Aspartate 281 is an ATP binding site.

The protein belongs to the SELO family. It depends on Mg(2+) as a cofactor. Requires Mn(2+) as cofactor.

It carries out the reaction L-seryl-[protein] + ATP = 3-O-(5'-adenylyl)-L-seryl-[protein] + diphosphate. It catalyses the reaction L-threonyl-[protein] + ATP = 3-O-(5'-adenylyl)-L-threonyl-[protein] + diphosphate. The catalysed reaction is L-tyrosyl-[protein] + ATP = O-(5'-adenylyl)-L-tyrosyl-[protein] + diphosphate. The enzyme catalyses L-histidyl-[protein] + UTP = N(tele)-(5'-uridylyl)-L-histidyl-[protein] + diphosphate. It carries out the reaction L-seryl-[protein] + UTP = O-(5'-uridylyl)-L-seryl-[protein] + diphosphate. It catalyses the reaction L-tyrosyl-[protein] + UTP = O-(5'-uridylyl)-L-tyrosyl-[protein] + diphosphate. In terms of biological role, nucleotidyltransferase involved in the post-translational modification of proteins. It can catalyze the addition of adenosine monophosphate (AMP) or uridine monophosphate (UMP) to a protein, resulting in modifications known as AMPylation and UMPylation. The polypeptide is Protein nucleotidyltransferase YdiU (Burkholderia multivorans (strain ATCC 17616 / 249)).